A 369-amino-acid polypeptide reads, in one-letter code: Ribonuclease 3 (369 aa).

An RNase III domain is found at 6–142 (IGFVQSSINY…IIGAVAADCD (137 aa)). A Mg(2+)-binding site is contributed by Glu-46. Asp-50 is a catalytic residue. Residues Asp-128 and Glu-131 each contribute to the Mg(2+) site. The active site involves Glu-131. The DRBM domain maps to 272 to 341 (NPASTLHELF…SLKLLKFIAK (70 aa)).

This sequence belongs to the ribonuclease III family. As to quaternary structure, homodimer. Requires Mg(2+) as cofactor.

It localises to the cytoplasm. The catalysed reaction is Endonucleolytic cleavage to 5'-phosphomonoester.. Its function is as follows. Digests double-stranded RNA. Involved in the processing of primary rRNA transcript to yield the immediate precursors to the large and small rRNAs (23S and 16S). Processes some mRNAs, and tRNAs when they are encoded in the rRNA operon. Processes pre-crRNA and tracrRNA of type II CRISPR loci if present in the organism. The protein is Ribonuclease 3 (rnc) of Treponema succinifaciens (strain ATCC 33096 / DSM 2489 / 6091).